Reading from the N-terminus, the 92-residue chain is Large ribosomal subunit protein uL23 (92 aa).

Belongs to the universal ribosomal protein uL23 family. Part of the 50S ribosomal subunit. Contacts protein L29, and trigger factor when it is bound to the ribosome.

One of the early assembly proteins it binds 23S rRNA. One of the proteins that surrounds the polypeptide exit tunnel on the outside of the ribosome. Forms the main docking site for trigger factor binding to the ribosome. The protein is Large ribosomal subunit protein uL23 of Bdellovibrio bacteriovorus (strain ATCC 15356 / DSM 50701 / NCIMB 9529 / HD100).